Consider the following 147-residue polypeptide: Large ribosomal subunit protein uL15 (147 aa).

A disordered region spans residues 1–62 (MDLSNLRPAI…GQMPLQRRLP (62 aa)). Composition is skewed to gly residues over residues 21–31 (RGPGSGNGKTA) and 42–52 (SGGGVKPGFEG).

The protein belongs to the universal ribosomal protein uL15 family. In terms of assembly, part of the 50S ribosomal subunit.

In terms of biological role, binds to the 23S rRNA. The polypeptide is Large ribosomal subunit protein uL15 (Syntrophotalea carbinolica (strain DSM 2380 / NBRC 103641 / GraBd1) (Pelobacter carbinolicus)).